The primary structure comprises 225 residues: MAPRPLHELVEAGWAKALDPVAGRIAAMGDFLRAEVAAGRTYLPAGANVLRAFQQPFDDVRVLIVGQDPYPTPGMAIGLSFAVSPEVRSLPGSLENIFRELHTDLGLPRPSNGDLTPWTEQGVLLLNRALTTAPRKPAAHRGKGWEEVTEQAIRALVARGTPLVSVLWGRDARNLRPLLGDLPAIESAHPSPMSADRGFFGSRPFSRANELLVRQGAQPVDWRLP.

The active-site Proton acceptor is the Asp-68.

It belongs to the uracil-DNA glycosylase (UDG) superfamily. UNG family.

The protein resides in the cytoplasm. It carries out the reaction Hydrolyzes single-stranded DNA or mismatched double-stranded DNA and polynucleotides, releasing free uracil.. Its function is as follows. Excises uracil residues from the DNA which can arise as a result of misincorporation of dUMP residues by DNA polymerase or due to deamination of cytosine. This chain is Uracil-DNA glycosylase 1 (ung1), found in Streptomyces avermitilis (strain ATCC 31267 / DSM 46492 / JCM 5070 / NBRC 14893 / NCIMB 12804 / NRRL 8165 / MA-4680).